We begin with the raw amino-acid sequence, 408 residues long: Bone morphogenetic protein 4 (408 aa).

A signal peptide spans 1-19; the sequence is MIPGNRMLMVVLLCQVLLG. Residues 20 to 292 constitute a propeptide that is removed on maturation; the sequence is GATDASLIPE…HTLTRRRAKR (273 aa). Residue Ser-91 is modified to Phosphoserine. The tract at residues 91 to 113 is disordered; it reads SGEEEEEEQSQGTGLEYPERPAS. N-linked (GlcNAc...) asparagine glycans are attached at residues Asn-144 and Asn-209. The interval 281–307 is disordered; it reads RGHTLTRRRAKRSPKHHPQRSRKKNKN. A compositionally biased stretch (basic residues) spans 284–307; sequence TLTRRRAKRSPKHHPQRSRKKNKN. 3 cysteine pairs are disulfide-bonded: Cys-308-Cys-373, Cys-337-Cys-405, and Cys-341-Cys-407. Residues Asn-350 and Asn-365 are each glycosylated (N-linked (GlcNAc...) asparagine).

It belongs to the TGF-beta family. Homodimer; disulfide-linked. Interacts with GREM2. Part of a complex consisting of TWSG1 and CHRD. Interacts with the serine proteases, HTRA1 and HTRA3; the interaction with either inhibits BMP4-mediated signaling. The HTRA protease activity is required for this inhibition. Interacts with SOSTDC1. Interacts with FBN1 (via N-terminal domain) and FBN2. Interacts with type I receptor BMPR1A. Interacts with type II receptor BMPR2. Interacts with FSTL1; this interaction inhibits the activation of the BMP4/Smad1/5/8 signaling pathway. Interacts with SCUBE3. Interacts with TGFBR3.

The protein localises to the secreted. The protein resides in the extracellular space. It localises to the extracellular matrix. Its function is as follows. Growth factor of the TGF-beta superfamily that plays essential roles in many developmental processes, including neurogenesis, vascular development, angiogenesis and osteogenesis. Acts in concert with PTHLH/PTHRP to stimulate ductal outgrowth during embryonic mammary development and to inhibit hair follicle induction. Initiates the canonical BMP signaling cascade by associating with type I receptor BMPR1A and type II receptor BMPR2. Once all three components are bound together in a complex at the cell surface, BMPR2 phosphorylates and activates BMPR1A. In turn, BMPR1A propagates signal by phosphorylating SMAD1/5/8 that travel to the nucleus and act as activators and repressors of transcription of target genes. Positively regulates the expression of odontogenic development regulator MSX1 via inducing the IPO7-mediated import of SMAD1 to the nucleus. Required for MSX1-mediated mesenchymal molar tooth bud development beyond the bud stage, via promoting Wnt signaling. Acts as a positive regulator of odontoblast differentiation during mesenchymal tooth germ formation, expression is repressed during the bell stage by MSX1-mediated inhibition of CTNNB1 signaling. Able to induce its own expression in dental mesenchymal cells and also in the neighboring dental epithelial cells via an MSX1-mediated pathway. Can also signal through non-canonical BMP pathways such as ERK/MAP kinase, PI3K/Akt, or SRC cascades. For example, induces SRC phosphorylation which, in turn, activates VEGFR2, leading to an angiogenic response. The protein is Bone morphogenetic protein 4 of Rattus norvegicus (Rat).